The sequence spans 591 residues: Putative BTB/POZ domain-containing protein At5g13600 (591 aa).

The BTB domain maps to 28–95; sequence PDVMIQVVDE…CYGVRIEVTP (68 aa). Positions 208–493 constitute an NPH3 domain; that stretch reads NWWFNDVSSF…VQVLFFEQMR (286 aa). Residue Y434 is modified to Phosphotyrosine.

This sequence belongs to the NPH3 family.

It functions in the pathway protein modification; protein ubiquitination. May act as a substrate-specific adapter of an E3 ubiquitin-protein ligase complex (CUL3-RBX1-BTB) which mediates the ubiquitination and subsequent proteasomal degradation of target proteins. The chain is Putative BTB/POZ domain-containing protein At5g13600 from Arabidopsis thaliana (Mouse-ear cress).